Here is a 421-residue protein sequence, read N- to C-terminus: Imidazolonepropionase (421 aa).

Fe(3+)-binding residues include H81 and H83. 2 residues coordinate Zn(2+): H81 and H83. 4-imidazolone-5-propanoate is bound by residues R90, Y153, and H186. Position 153 (Y153) interacts with N-formimidoyl-L-glutamate. H251 is a Fe(3+) binding site. H251 contacts Zn(2+). E254 contributes to the 4-imidazolone-5-propanoate binding site. D326 is a binding site for Fe(3+). A Zn(2+)-binding site is contributed by D326. N328 and G330 together coordinate N-formimidoyl-L-glutamate. S331 lines the 4-imidazolone-5-propanoate pocket.

This sequence belongs to the metallo-dependent hydrolases superfamily. HutI family. The cofactor is Zn(2+). It depends on Fe(3+) as a cofactor.

The protein localises to the cytoplasm. It carries out the reaction 4-imidazolone-5-propanoate + H2O = N-formimidoyl-L-glutamate. Its pathway is amino-acid degradation; L-histidine degradation into L-glutamate; N-formimidoyl-L-glutamate from L-histidine: step 3/3. In terms of biological role, catalyzes the hydrolytic cleavage of the carbon-nitrogen bond in imidazolone-5-propanoate to yield N-formimidoyl-L-glutamate. It is the third step in the universal histidine degradation pathway. The sequence is that of Imidazolonepropionase from Streptococcus pyogenes serotype M4 (strain MGAS10750).